An 84-amino-acid chain; its full sequence is Small ribosomal subunit protein bS20 (84 aa).

This sequence belongs to the bacterial ribosomal protein bS20 family.

Its function is as follows. Binds directly to 16S ribosomal RNA. This Latilactobacillus sakei subsp. sakei (strain 23K) (Lactobacillus sakei subsp. sakei) protein is Small ribosomal subunit protein bS20.